The chain runs to 218 residues: Elongation factor Ts (218 aa).

The involved in Mg(2+) ion dislocation from EF-Tu stretch occupies residues Thr-82 to Val-85.

The protein belongs to the EF-Ts family.

Its subcellular location is the cytoplasm. Associates with the EF-Tu.GDP complex and induces the exchange of GDP to GTP. It remains bound to the aminoacyl-tRNA.EF-Tu.GTP complex up to the GTP hydrolysis stage on the ribosome. This is Elongation factor Ts from Prochlorococcus marinus (strain AS9601).